The following is a 266-amino-acid chain: Undecaprenyl-diphosphatase (266 aa).

Helical transmembrane passes span 4 to 24 (WLIA…PVSS), 46 to 66 (VLIQ…RLWG), 82 to 102 (IGIL…HDFI), 105 to 125 (VLYE…FILL), 142 to 162 (YPLK…VPGV), 182 to 202 (AAEF…AYDL), 216 to 236 (LIGI…KTVL), and 244 to 264 (FAPF…LLYI).

Belongs to the UppP family.

The protein localises to the cell inner membrane. The catalysed reaction is di-trans,octa-cis-undecaprenyl diphosphate + H2O = di-trans,octa-cis-undecaprenyl phosphate + phosphate + H(+). Functionally, catalyzes the dephosphorylation of undecaprenyl diphosphate (UPP). Confers resistance to bacitracin. This is Undecaprenyl-diphosphatase from Caulobacter vibrioides (strain ATCC 19089 / CIP 103742 / CB 15) (Caulobacter crescentus).